Consider the following 362-residue polypeptide: Heat-inducible transcription repressor HrcA (362 aa).

Belongs to the HrcA family.

Negative regulator of class I heat shock genes (grpE-dnaK-dnaJ and groELS operons). Prevents heat-shock induction of these operons. The protein is Heat-inducible transcription repressor HrcA of Rhodopseudomonas palustris (strain ATCC BAA-98 / CGA009).